Reading from the N-terminus, the 157-residue chain is SsrA-binding protein (157 aa).

This sequence belongs to the SmpB family.

The protein resides in the cytoplasm. In terms of biological role, required for rescue of stalled ribosomes mediated by trans-translation. Binds to transfer-messenger RNA (tmRNA), required for stable association of tmRNA with ribosomes. tmRNA and SmpB together mimic tRNA shape, replacing the anticodon stem-loop with SmpB. tmRNA is encoded by the ssrA gene; the 2 termini fold to resemble tRNA(Ala) and it encodes a 'tag peptide', a short internal open reading frame. During trans-translation Ala-aminoacylated tmRNA acts like a tRNA, entering the A-site of stalled ribosomes, displacing the stalled mRNA. The ribosome then switches to translate the ORF on the tmRNA; the nascent peptide is terminated with the 'tag peptide' encoded by the tmRNA and targeted for degradation. The ribosome is freed to recommence translation, which seems to be the essential function of trans-translation. In Limosilactobacillus reuteri (strain DSM 20016) (Lactobacillus reuteri), this protein is SsrA-binding protein.